Reading from the N-terminus, the 176-residue chain is Flavodoxin (176 aa).

Positions 4 to 165 (IGIFFGSDTG…RVEKWVKQVA (162 aa)) constitute a Flavodoxin-like domain.

This sequence belongs to the flavodoxin family. It depends on FMN as a cofactor.

Functionally, low-potential electron donor to a number of redox enzymes. This is Flavodoxin (fldA) from Klebsiella pneumoniae.